The sequence spans 896 residues: Protein translocase subunit SecA (896 aa).

Residues Q87, 105-109, and D512 each bind ATP; that span reads GEGKT. The segment at 867–889 is disordered; that stretch reads QEPARSNRVAGRNDPCPCGSGKK. Residues C882, C884, C893, and C894 each contribute to the Zn(2+) site.

Belongs to the SecA family. Monomer and homodimer. Part of the essential Sec protein translocation apparatus which comprises SecA, SecYEG and auxiliary proteins SecDF-YajC and YidC. Zn(2+) is required as a cofactor.

Its subcellular location is the cell inner membrane. It is found in the cytoplasm. The catalysed reaction is ATP + H2O + cellular proteinSide 1 = ADP + phosphate + cellular proteinSide 2.. Functionally, part of the Sec protein translocase complex. Interacts with the SecYEG preprotein conducting channel. Has a central role in coupling the hydrolysis of ATP to the transfer of proteins into and across the cell membrane, serving as an ATP-driven molecular motor driving the stepwise translocation of polypeptide chains across the membrane. This chain is Protein translocase subunit SecA, found in Pelobacter propionicus (strain DSM 2379 / NBRC 103807 / OttBd1).